Consider the following 386-residue polypeptide: Uroporphyrinogen decarboxylase (386 aa).

The coproporphyrinogen I site is built by arginine 44, alanine 46, arginine 48, arginine 57, aspartate 93, tyrosine 170, serine 225, and histidine 364. Residues arginine 44, alanine 46, and arginine 48 each contribute to the coproporphyrinogen III site. Residues aspartate 93, tyrosine 170, serine 225, and histidine 364 each coordinate coproporphyrinogen III.

Belongs to the uroporphyrinogen decarboxylase family. As to quaternary structure, homodimer.

The protein resides in the cytoplasm. Its subcellular location is the cytosol. It carries out the reaction uroporphyrinogen III + 4 H(+) = coproporphyrinogen III + 4 CO2. Its pathway is porphyrin-containing compound metabolism; protoporphyrin-IX biosynthesis; coproporphyrinogen-III from 5-aminolevulinate: step 4/4. Catalyzes the decarboxylation of four acetate groups of uroporphyrinogen-III to yield coproporphyrinogen-III. This Drosophila virilis (Fruit fly) protein is Uroporphyrinogen decarboxylase.